The primary structure comprises 59 residues: Large ribosomal subunit protein uL30 (59 aa).

The protein belongs to the universal ribosomal protein uL30 family. Part of the 50S ribosomal subunit.

This chain is Large ribosomal subunit protein uL30, found in Yersinia pseudotuberculosis serotype I (strain IP32953).